Here is a 172-residue protein sequence, read N- to C-terminus: Adenine phosphoribosyltransferase (172 aa).

The protein belongs to the purine/pyrimidine phosphoribosyltransferase family. As to quaternary structure, homodimer.

The protein localises to the cytoplasm. It catalyses the reaction AMP + diphosphate = 5-phospho-alpha-D-ribose 1-diphosphate + adenine. It participates in purine metabolism; AMP biosynthesis via salvage pathway; AMP from adenine: step 1/1. Its function is as follows. Catalyzes a salvage reaction resulting in the formation of AMP, that is energically less costly than de novo synthesis. The chain is Adenine phosphoribosyltransferase from Picosynechococcus sp. (strain ATCC 27264 / PCC 7002 / PR-6) (Agmenellum quadruplicatum).